The following is a 209-amino-acid chain: ATP-dependent Clp protease proteolytic subunit (209 aa).

S107 (nucleophile) is an active-site residue. H132 is a catalytic residue.

It belongs to the peptidase S14 family. In terms of assembly, fourteen ClpP subunits assemble into 2 heptameric rings which stack back to back to give a disk-like structure with a central cavity, resembling the structure of eukaryotic proteasomes.

The protein localises to the cytoplasm. It catalyses the reaction Hydrolysis of proteins to small peptides in the presence of ATP and magnesium. alpha-casein is the usual test substrate. In the absence of ATP, only oligopeptides shorter than five residues are hydrolyzed (such as succinyl-Leu-Tyr-|-NHMec, and Leu-Tyr-Leu-|-Tyr-Trp, in which cleavage of the -Tyr-|-Leu- and -Tyr-|-Trp bonds also occurs).. In terms of biological role, cleaves peptides in various proteins in a process that requires ATP hydrolysis. Has a chymotrypsin-like activity. Plays a major role in the degradation of misfolded proteins. The chain is ATP-dependent Clp protease proteolytic subunit from Methylobacterium nodulans (strain LMG 21967 / CNCM I-2342 / ORS 2060).